The chain runs to 447 residues: MGQNFHAFMFPWFAFGHMTPYLHLANKLAAKGHRVTFLLPKKAQKQLEHHNLFPDRIIFHSLTIPHVDGLPAGAETASDIPISLGKFLTAAMDLTRDQVEAAVRALRPDLIFFDTAYWVPEMAKEHRVKSVIYFVISANSIAHELVPGGELGVPPPGYPSSKVLYRGHDAHALLTFSIFYERLHYRITTGLKNCDFISIRTCKEIEGKFCDYIERQYQRKVLLTGPMLPEPDNSRPLEDRWNHWLNQFKPGSVIYCALGSQITLEKDQFQELCLGMELTGLPFLVAVKPPKGAKTIQEALPEGFEERVKNHGVVWGEWVQQPLILAHPSVGCFVTHCGFGSMWESLVSDCQIVLLPYLCDQILNTRLMSEELEVSVEVKREETGWFSKESLSVAITSVMDKDSELGNLVRRNHAKLKEVLVSPGLLTGYTDEFVETLQNIVNDTNLE.

UDP-alpha-D-glucose contacts are provided by residues Ser-260, 319 to 321 (VQQ), 336 to 344 (HCGFGSMWE), and 358 to 361 (LCDQ).

This sequence belongs to the UDP-glycosyltransferase family.

This Arabidopsis thaliana (Mouse-ear cress) protein is UDP-glycosyltransferase 79B9 (UGT79B9).